The primary structure comprises 96 residues: Large ribosomal subunit protein bL28 (96 aa).

The protein belongs to the bacterial ribosomal protein bL28 family.

This is Large ribosomal subunit protein bL28 from Methylocella silvestris (strain DSM 15510 / CIP 108128 / LMG 27833 / NCIMB 13906 / BL2).